The sequence spans 290 residues: Multiple sugar-binding transport system permease protein MsmF (290 aa).

7 helical membrane passes run 12-32 (GWTF…FPMF), 72-92 (FTLV…IIIA), 104-124 (FFRA…SLIF), 156-176 (VIAS…ILFL), 201-221 (FWSV…IMAL), 231-253 (IFAL…VYNY), and 260-280 (YGYA…VSVL). Residues 70 to 281 (IGFTLVLTLA…IIIGIVSVLQ (212 aa)) form the ABC transmembrane type-1 domain.

It belongs to the binding-protein-dependent transport system permease family. MalFG subfamily.

It is found in the cell membrane. Involved in a binding protein-dependent transport system responsible for the uptake of melibiose, raffinose and isomaltotriose. The polypeptide is Multiple sugar-binding transport system permease protein MsmF (msmF) (Streptococcus mutans serotype c (strain ATCC 700610 / UA159)).